Here is a 258-residue protein sequence, read N- to C-terminus: Imidazole glycerol phosphate synthase subunit HisF (258 aa).

Catalysis depends on residues D11 and D130.

This sequence belongs to the HisA/HisF family. Heterodimer of HisH and HisF.

It is found in the cytoplasm. The catalysed reaction is 5-[(5-phospho-1-deoxy-D-ribulos-1-ylimino)methylamino]-1-(5-phospho-beta-D-ribosyl)imidazole-4-carboxamide + L-glutamine = D-erythro-1-(imidazol-4-yl)glycerol 3-phosphate + 5-amino-1-(5-phospho-beta-D-ribosyl)imidazole-4-carboxamide + L-glutamate + H(+). It functions in the pathway amino-acid biosynthesis; L-histidine biosynthesis; L-histidine from 5-phospho-alpha-D-ribose 1-diphosphate: step 5/9. IGPS catalyzes the conversion of PRFAR and glutamine to IGP, AICAR and glutamate. The HisF subunit catalyzes the cyclization activity that produces IGP and AICAR from PRFAR using the ammonia provided by the HisH subunit. The protein is Imidazole glycerol phosphate synthase subunit HisF of Methylobacterium sp. (strain 4-46).